We begin with the raw amino-acid sequence, 921 residues long: Isoleucine--tRNA ligase (921 aa).

Residues Pro-57–His-67 carry the 'HIGH' region motif. Glu-552 contacts L-isoleucyl-5'-AMP. Positions Lys-593–Ser-597 match the 'KMSKS' region motif. Lys-596 provides a ligand contact to ATP. Positions 888, 891, 908, and 911 each coordinate Zn(2+).

It belongs to the class-I aminoacyl-tRNA synthetase family. IleS type 1 subfamily. Monomer. It depends on Zn(2+) as a cofactor.

It localises to the cytoplasm. It catalyses the reaction tRNA(Ile) + L-isoleucine + ATP = L-isoleucyl-tRNA(Ile) + AMP + diphosphate. Its function is as follows. Catalyzes the attachment of isoleucine to tRNA(Ile). As IleRS can inadvertently accommodate and process structurally similar amino acids such as valine, to avoid such errors it has two additional distinct tRNA(Ile)-dependent editing activities. One activity is designated as 'pretransfer' editing and involves the hydrolysis of activated Val-AMP. The other activity is designated 'posttransfer' editing and involves deacylation of mischarged Val-tRNA(Ile). This is Isoleucine--tRNA ligase from Bacillus cereus (strain 03BB102).